A 316-amino-acid polypeptide reads, in one-letter code: PAK4-inhibitor inka2 (316 aa).

Disordered stretches follow at residues 43-74 and 108-130; these read RSSPPPSPDIEKPCVVPPRRAPRRDNRISHRT and YSEVSGGSLRGEEDDIVEEESET. A compositionally biased stretch (basic and acidic residues) spans 65–74; that stretch reads RRDNRISHRT. The segment covering 119–129 has biased composition (acidic residues); the sequence is EEDDIVEEESE. An inka box region spans residues 182 to 219; the sequence is DSQDWTGCLLSQSRSRQPLVLGDNSFADLVKQWMDLPE.

The protein belongs to the INKA family.

The protein resides in the nucleus. In terms of biological role, inhibitor of the serine/threonine-protein kinase pak4/pak5. Acts by binding pak4/pak5 in a substrate-like manner, inhibiting the protein kinase activity. The protein is PAK4-inhibitor inka2 of Xenopus laevis (African clawed frog).